Here is a 64-residue protein sequence, read N- to C-terminus: Small ribosomal subunit protein bS21 (64 aa).

The segment at 40-64 (PPSVKRKIKSQEAQRRMRRTKRKRF) is disordered. Basic residues predominate over residues 55-64 (RMRRTKRKRF).

The protein belongs to the bacterial ribosomal protein bS21 family.

This is Small ribosomal subunit protein bS21 from Elusimicrobium minutum (strain Pei191).